We begin with the raw amino-acid sequence, 100 residues long: UPF0251 protein VVA1436 (100 aa).

This sequence belongs to the UPF0251 family.

In Vibrio vulnificus (strain YJ016), this protein is UPF0251 protein VVA1436.